The chain runs to 608 residues: Glutamine--fructose-6-phosphate aminotransferase [isomerizing] (608 aa).

Cysteine 2 serves as the catalytic Nucleophile; for GATase activity. The 216-residue stretch at cysteine 2–alanine 217 folds into the Glutamine amidotransferase type-2 domain. 2 consecutive SIS domains span residues leucine 284–lysine 423 and leucine 456–proline 598. The For Fru-6P isomerization activity role is filled by lysine 603.

Its subcellular location is the cytoplasm. The enzyme catalyses D-fructose 6-phosphate + L-glutamine = D-glucosamine 6-phosphate + L-glutamate. Functionally, involved in the production of the root hair deformation (HAD) factor specifically on soybean. The sequence is that of Glutamine--fructose-6-phosphate aminotransferase [isomerizing] (nodM) from Bradyrhizobium diazoefficiens (strain JCM 10833 / BCRC 13528 / IAM 13628 / NBRC 14792 / USDA 110).